A 342-amino-acid polypeptide reads, in one-letter code: Heat-inducible transcription repressor HrcA (342 aa).

Belongs to the HrcA family.

Negative regulator of class I heat shock genes (grpE-dnaK-dnaJ and groELS operons). Prevents heat-shock induction of these operons. This is Heat-inducible transcription repressor HrcA from Dechloromonas aromatica (strain RCB).